Here is a 188-residue protein sequence, read N- to C-terminus: GTP cyclohydrolase 1 (188 aa).

Residues Cys-78, His-81, and Cys-150 each coordinate Zn(2+).

Belongs to the GTP cyclohydrolase I family. In terms of assembly, toroid-shaped homodecamer, composed of two pentamers of five dimers.

The catalysed reaction is GTP + H2O = 7,8-dihydroneopterin 3'-triphosphate + formate + H(+). It functions in the pathway cofactor biosynthesis; 7,8-dihydroneopterin triphosphate biosynthesis; 7,8-dihydroneopterin triphosphate from GTP: step 1/1. This is GTP cyclohydrolase 1 from Halalkalibacterium halodurans (strain ATCC BAA-125 / DSM 18197 / FERM 7344 / JCM 9153 / C-125) (Bacillus halodurans).